Consider the following 154-residue polypeptide: Deoxyuridine 5'-triphosphate nucleotidohydrolase (154 aa).

Substrate is bound by residues 64-66 (RSG), Asn77, 81-83 (TVD), and Lys91. The tract at residues 135-154 (LADTTRGDGGHGSSGGHASL) is disordered. Over residues 144–154 (GHGSSGGHASL) the composition is skewed to gly residues.

This sequence belongs to the dUTPase family. As to quaternary structure, homotrimer. Mg(2+) serves as cofactor.

It carries out the reaction dUTP + H2O = dUMP + diphosphate + H(+). Its pathway is pyrimidine metabolism; dUMP biosynthesis; dUMP from dCTP (dUTP route): step 2/2. This enzyme is involved in nucleotide metabolism: it produces dUMP, the immediate precursor of thymidine nucleotides and it decreases the intracellular concentration of dUTP so that uracil cannot be incorporated into DNA. The sequence is that of Deoxyuridine 5'-triphosphate nucleotidohydrolase from Mycolicibacterium vanbaalenii (strain DSM 7251 / JCM 13017 / BCRC 16820 / KCTC 9966 / NRRL B-24157 / PYR-1) (Mycobacterium vanbaalenii).